A 457-amino-acid chain; its full sequence is BAG family molecular chaperone regulator 4 (457 aa).

Positions 1–101 (MSALRRSGYG…QPPYPSYNSN (101 aa)) are disordered. Position 7 is a phosphoserine (Ser-7). The segment covering 8 to 20 (GYGPSDGPSYGRY) has biased composition (low complexity). The segment covering 30-47 (VHPPPPLYPLRPEPPQPP) has biased composition (pro residues). Omega-N-methylarginine is present on residues Arg-40, Arg-53, and Arg-108. 3 disordered regions span residues 113-136 (YPST…NGAY), 166-333 (STEV…DDSD), and 347-377 (LYGN…ESTP). A compositionally biased stretch (polar residues) spans 166 to 182 (STEVPSTYRSSGNSPTP). Residue Arg-185 is modified to Omega-N-methylarginine. Composition is skewed to low complexity over residues 274–284 (STSPWPSSGSP) and 294–308 (QPKD…SDQS). Composition is skewed to polar residues over residues 320-333 (QYES…DDSD) and 347-365 (LYGN…SSSL). Positions 379–456 (SIKKIIHVLE…AILEKLEKKG (78 aa)) constitute a BAG domain.

Binds to the ATPase domain of HSP/HSC70 chaperones. Binds to the death domain of TNFRSF1A in the absence of TNF and thereby prevents binding of adapter molecules such as TRADD or TRAF2. Binds to the death domain of TNFRSF12. Interacts with PRKN. As to expression, ubiquitous.

The protein resides in the cytoplasm. Its function is as follows. Inhibits the chaperone activity of HSP70/HSC70 by promoting substrate release. Prevents constitutive TNFRSF1A signaling. Negative regulator of PRKN translocation to damaged mitochondria. The polypeptide is BAG family molecular chaperone regulator 4 (BAG4) (Homo sapiens (Human)).